The sequence spans 115 residues: MSTSEILKHIYDINLSYLLLAQRLIHDDKASAMFRLGIDADMAETLVQLTLPQMVKLAETNQLVCQFRFEDHQTIQRLTQESRVDDLQQIHTGILLSSHLLQQLSADGNDSGKRG.

Belongs to the FlhD family. In terms of assembly, homodimer; disulfide-linked. Forms a heterohexamer composed of two FlhC and four FlhD subunits. Each FlhC binds a FlhD dimer, forming a heterotrimer, and a hexamer assembles by dimerization of two heterotrimers.

The protein localises to the cytoplasm. Functions in complex with FlhC as a master transcriptional regulator that regulates transcription of several flagellar and non-flagellar operons by binding to their promoter region. Activates expression of class 2 flagellar genes, including fliA, which is a flagellum-specific sigma factor that turns on the class 3 genes. Also regulates genes whose products function in a variety of physiological pathways. The polypeptide is Flagellar transcriptional regulator FlhD (Edwardsiella ictaluri (strain 93-146)).